The following is a 577-amino-acid chain: Sulfite reductase [NADPH] hemoprotein beta-component (577 aa).

Residues Cys-436, Cys-442, Cys-481, and Cys-485 each contribute to the [4Fe-4S] cluster site. Cys-485 contributes to the siroheme binding site.

This sequence belongs to the nitrite and sulfite reductase 4Fe-4S domain family. As to quaternary structure, alpha(8)-beta(8). The alpha component is a flavoprotein, the beta component is a hemoprotein. The cofactor is siroheme. It depends on [4Fe-4S] cluster as a cofactor.

It carries out the reaction hydrogen sulfide + 3 NADP(+) + 3 H2O = sulfite + 3 NADPH + 4 H(+). Its pathway is sulfur metabolism; hydrogen sulfide biosynthesis; hydrogen sulfide from sulfite (NADPH route): step 1/1. Functionally, component of the sulfite reductase complex that catalyzes the 6-electron reduction of sulfite to sulfide. This is one of several activities required for the biosynthesis of L-cysteine from sulfate. The sequence is that of Sulfite reductase [NADPH] hemoprotein beta-component from Shewanella woodyi (strain ATCC 51908 / MS32).